The chain runs to 952 residues: Ubiquitin carboxyl-terminal hydrolase 15 (952 aa).

Ala-2 is modified (N-acetylalanine). The tract at residues 2-223 (AEGGAADLDT…KNEDGTWPRG (222 aa)) is mediates interaction with SART3. One can recognise a DUSP domain in the interval 7-118 (ADLDTQRSDI…GQEPIARKVV (112 aa)). The USP domain maps to 260 to 904 (CGLSNLGNTC…AAYVLFYQRQ (645 aa)). Cys-269 (nucleophile) is an active-site residue. Phosphothreonine is present on Thr-573. Residues 597-665 (ETDGPLRCCE…GGDNDSENGL (69 aa)) are disordered. Positions 627 to 644 (METDEPDDESSQDQELPS) are enriched in acidic residues. Residue His-862 is the Proton acceptor of the active site. The tract at residues 923–952 (SAATGVPLESDEDSNDNDNDLENENCMHTN) is disordered. The span at 931–945 (ESDEDSNDNDNDLEN) shows a compositional bias: acidic residues. Residues Ser-932 and Ser-936 each carry the phosphoserine modification.

The protein belongs to the peptidase C19 family. A homodimer structure has been reported; however it is unclear whether the protein form a homodimer in vivo. Identified in a complex with the COP9 signalosome complex (CSN). Interacts with SMAD1, SMAD2 and SMAD3; the interaction is direct. Forms a complex with SMURF2 and SMAD7. Interacts with TGFBR1. Interacts with SART3; the interaction is direct. May interact with RNF20 and RNF40. May interact with PRKN. Interacts with INCA1. Phosphorylated. Phosphorylation protects against ubiquitination and subsequent degradation by the proteasome. Post-translationally, ubiquitinated, leading to degradation by the proteasome. In terms of tissue distribution, highly expressed in testis and spleen, and at lower level in other tissues.

It is found in the cytoplasm. The protein resides in the nucleus. The protein localises to the mitochondrion. It carries out the reaction Thiol-dependent hydrolysis of ester, thioester, amide, peptide and isopeptide bonds formed by the C-terminal Gly of ubiquitin (a 76-residue protein attached to proteins as an intracellular targeting signal).. In terms of biological role, hydrolase that removes conjugated ubiquitin from target proteins and regulates various pathways such as the TGF-beta receptor signaling, NF-kappa-B and RNF41/NRDP1-PRKN pathways. Acts as a key regulator of TGF-beta receptor signaling pathway, but the precise mechanism is still unclear: according to a report, acts by promoting deubiquitination of monoubiquitinated R-SMADs (SMAD1, SMAD2 and/or SMAD3), thereby alleviating inhibition of R-SMADs and promoting activation of TGF-beta target genes. According to another reports, regulates the TGF-beta receptor signaling pathway by mediating deubiquitination and stabilization of TGFBR1, leading to an enhanced TGF-beta signal. Able to mediate deubiquitination of monoubiquitinated substrates, 'Lys-27'-, 'Lys-48'- and 'Lys-63'-linked polyubiquitin chains. May also regulate gene expression and/or DNA repair through the deubiquitination of histone H2B. Acts as an inhibitor of mitophagy by counteracting the action of parkin (PRKN): hydrolyzes cleavage of 'Lys-48'- and 'Lys-63'-linked polyubiquitin chains attached by parkin on target proteins such as MFN2, thereby reducing parkin's ability to drive mitophagy. Acts as an associated component of COP9 signalosome complex (CSN) and regulates different pathways via this association: regulates NF-kappa-B by mediating deubiquitination of NFKBIA and deubiquitinates substrates bound to VCP. Involved in endosome organization by mediating deubiquitination of SQSTM1: ubiquitinated SQSTM1 forms a molecular bridge that restrains cognate vesicles in the perinuclear region and its deubiquitination releases target vesicles for fast transport into the cell periphery. Acts as a negative regulator of antifungal immunity by mediating 'Lys-27'-linked deubiquitination of CARD9, thereby inactivating CARD9. This is Ubiquitin carboxyl-terminal hydrolase 15 (Usp15) from Rattus norvegicus (Rat).